A 227-amino-acid polypeptide reads, in one-letter code: 7-cyano-7-deazaguanine synthase (227 aa).

8–18 lines the ATP pocket; the sequence is VSGGADSATVL. C192, C202, C205, and C208 together coordinate Zn(2+).

Belongs to the QueC family. It depends on Zn(2+) as a cofactor.

The catalysed reaction is 7-carboxy-7-deazaguanine + NH4(+) + ATP = 7-cyano-7-deazaguanine + ADP + phosphate + H2O + H(+). Its pathway is purine metabolism; 7-cyano-7-deazaguanine biosynthesis. Its function is as follows. Catalyzes the ATP-dependent conversion of 7-carboxy-7-deazaguanine (CDG) to 7-cyano-7-deazaguanine (preQ(0)). The chain is 7-cyano-7-deazaguanine synthase from Rickettsia canadensis (strain McKiel).